Consider the following 869-residue polypeptide: DNA mismatch repair protein MutS (869 aa).

602–609 (GPNMSGKS) serves as a coordination point for ATP.

It belongs to the DNA mismatch repair MutS family.

Its function is as follows. This protein is involved in the repair of mismatches in DNA. It is possible that it carries out the mismatch recognition step. This protein has a weak ATPase activity. The polypeptide is DNA mismatch repair protein MutS (Bacillus licheniformis (strain ATCC 14580 / DSM 13 / JCM 2505 / CCUG 7422 / NBRC 12200 / NCIMB 9375 / NCTC 10341 / NRRL NRS-1264 / Gibson 46)).